The following is a 95-amino-acid chain: MVSTNNELSTEKKLNNLEYFPMNNNENFNRDEMRRIRRQRQQQHLQQQYQIRQIKKELKENKSTGSKILNFLKKFIENDGENQTQTLKVKMNFVY.

This is an uncharacterized protein from Dictyostelium discoideum (Social amoeba).